A 248-amino-acid chain; its full sequence is MIRNQGWSLLYRIYPVRRFTRYSRVDMTFEGNTQDISTSVEERMTTVFGGRLKGEPPRSTSRVLSGGTKKIAGVQVPAKPQEPDNCCMSGCVNCVWEIYSEDLRDWKHRRKEAAEKIAGTKEKWPKDWNPPLGLLHMENVPVELREKKLETDSKKAEQPHDLSAIRSLFPKRKGPLPKSVLAAKRKNIALRHNYEQKDGGDQSVSESDADEGWEDIPVYVKAFAEFESKKRLQKIRRQEEIKKRTALV.

A mitochondrion-targeting transit peptide spans 1–26 (MIRNQGWSLLYRIYPVRRFTRYSRVD). Residues 69 to 116 (KKIAGVQVPAKPQEPDNCCMSGCVNCVWEIYSEDLRDWKHRRKEAAEK) enclose the Oxidoreductase-like domain.

It belongs to the UPF0651 family.

The protein resides in the mitochondrion. The sequence is that of UPF0651 protein YPL107W, mitochondrial from Saccharomyces cerevisiae (strain ATCC 204508 / S288c) (Baker's yeast).